The following is a 141-amino-acid chain: Nucleoside diphosphate kinase (141 aa).

ATP is bound by residues lysine 11, phenylalanine 59, arginine 87, threonine 93, arginine 104, and asparagine 114. Histidine 117 functions as the Pros-phosphohistidine intermediate in the catalytic mechanism.

It belongs to the NDK family. As to quaternary structure, homotetramer. Mg(2+) serves as cofactor.

The protein localises to the cytoplasm. It carries out the reaction a 2'-deoxyribonucleoside 5'-diphosphate + ATP = a 2'-deoxyribonucleoside 5'-triphosphate + ADP. It catalyses the reaction a ribonucleoside 5'-diphosphate + ATP = a ribonucleoside 5'-triphosphate + ADP. Its function is as follows. Major role in the synthesis of nucleoside triphosphates other than ATP. The ATP gamma phosphate is transferred to the NDP beta phosphate via a ping-pong mechanism, using a phosphorylated active-site intermediate. The chain is Nucleoside diphosphate kinase from Haemophilus influenzae (strain 86-028NP).